The sequence spans 438 residues: Adenylosuccinate synthetase (438 aa).

Residues 13-19 (GDEGKGK) and 41-43 (GHT) contribute to the GTP site. The active-site Proton acceptor is aspartate 14. Residues aspartate 14 and glycine 41 each contribute to the Mg(2+) site. Residues 14–17 (DEGK), 39–42 (NAGH), threonine 130, arginine 144, glutamine 225, threonine 240, and arginine 312 each bind IMP. Histidine 42 (proton donor) is an active-site residue. 308–314 (ATTGRQR) is a binding site for substrate. Residues arginine 314, 340–342 (KLD), and 422–424 (STG) contribute to the GTP site.

Belongs to the adenylosuccinate synthetase family. Homodimer. Requires Mg(2+) as cofactor.

Its subcellular location is the cytoplasm. It catalyses the reaction IMP + L-aspartate + GTP = N(6)-(1,2-dicarboxyethyl)-AMP + GDP + phosphate + 2 H(+). The protein operates within purine metabolism; AMP biosynthesis via de novo pathway; AMP from IMP: step 1/2. Plays an important role in the de novo pathway of purine nucleotide biosynthesis. Catalyzes the first committed step in the biosynthesis of AMP from IMP. This chain is Adenylosuccinate synthetase, found in Ruthia magnifica subsp. Calyptogena magnifica.